The chain runs to 529 residues: MQQRRPIRRALLSVSDKAGIVEFAQALSHRGVELLSTGGTARLLADAGLAVTEVSDYTGFPEMMDGRVKTLHPKVHGGILGRRDQDDAIMTQHDIKPIDIVVVNLYPFAQTVARENCTLEDAVENIDIGGPTMVRSAAKNHKDVAIVVKSSDYTTIINEIDANEGSLTYETRFDLAIKAFEHTAAYDSMIANYFGALVPPYHGDTDKPSGHFPRTLNLNYIKKQDMRYGENSHQQAAFYIEENIHEASVATSTQLQGKALSYNNIADTDAALECVKEFAEPACVIVKHANPCGVAIGGSILDAYDRAYKTDPTSAFGGIIAFNRELDEETAQAIISRQFVEVIIAPSASDAALKVTAAKQNVRVLTSGSWQQRVPALDFKRVNGGLLVQDRDLGMVDTSQLRVVTERQPSEQELRDALFCWKVAKFVKSNAIVYARDNMTIGIGAGQMSRVYSAKIAGIKAADEGLEVKGSAMASDAFFPFRDGIDAAAAVGISCVIQPGGSIRDDEVIAAANEHGIAMIFTDMRHFRH.

The MGS-like domain maps to 1 to 148; sequence MQQRRPIRRA…KNHKDVAIVV (148 aa).

Belongs to the PurH family.

The enzyme catalyses (6R)-10-formyltetrahydrofolate + 5-amino-1-(5-phospho-beta-D-ribosyl)imidazole-4-carboxamide = 5-formamido-1-(5-phospho-D-ribosyl)imidazole-4-carboxamide + (6S)-5,6,7,8-tetrahydrofolate. It carries out the reaction IMP + H2O = 5-formamido-1-(5-phospho-D-ribosyl)imidazole-4-carboxamide. It functions in the pathway purine metabolism; IMP biosynthesis via de novo pathway; 5-formamido-1-(5-phospho-D-ribosyl)imidazole-4-carboxamide from 5-amino-1-(5-phospho-D-ribosyl)imidazole-4-carboxamide (10-formyl THF route): step 1/1. Its pathway is purine metabolism; IMP biosynthesis via de novo pathway; IMP from 5-formamido-1-(5-phospho-D-ribosyl)imidazole-4-carboxamide: step 1/1. The polypeptide is Bifunctional purine biosynthesis protein PurH (Pectobacterium atrosepticum (strain SCRI 1043 / ATCC BAA-672) (Erwinia carotovora subsp. atroseptica)).